The chain runs to 195 residues: Cysteine/O-acetylserine efflux protein (195 aa).

At 1–9 (MTPILLSAF) the chain is on the periplasmic side. The chain crosses the membrane as a helical span at residues 10–32 (WTYTLITAMTPGPNNILALSSAT). Topologically, residues 33 to 46 (SHGFRQSTRVLAGM) are cytoplasmic. The chain crosses the membrane as a helical span at residues 47–67 (SLGFLIVMLLCAGISFSLAVI). At 68 to 69 (DP) the chain is on the periplasmic side. A helical transmembrane segment spans residues 70 to 90 (AAVHLLSWAGAAYIVWLAWKI). Over 91–104 (ATSPTKEDGLQAKP) the chain is Cytoplasmic. A helical transmembrane segment spans residues 105–125 (ISFWASFALQFVNVKIILYGV). Over 126-141 (TALSTFVLPQTQALSW) the chain is Periplasmic. Residues 142-162 (VVGVSVLLAMIGTFGNVCWAL) traverse the membrane as a helical segment. Residues 163–176 (AGHLFQRLFRQYGR) lie on the Cytoplasmic side of the membrane. The chain crosses the membrane as a helical span at residues 177–194 (QLNIVLALLLVYCAVRIF). Residue Tyr195 is a topological domain, periplasmic.

This sequence belongs to the Rht family.

It is found in the cell inner membrane. It carries out the reaction O-acetyl-L-serine(in) = O-acetyl-L-serine(out). The enzyme catalyses L-cysteine(in) = L-cysteine(out). In terms of biological role, exporter of O-acetylserine (OAS) and cysteine. The chain is Cysteine/O-acetylserine efflux protein (eamB) from Shigella flexneri serotype 5b (strain 8401).